Consider the following 583-residue polypeptide: MRRHPQTATKHLFVSGGVASSLGKGLTASSLGQLLTARGLRVTMQKLDPYLNVDPGTMNPFQHGEVFVTEDGAETDLDVGHYERFLDRDLSGSANVTTGQVYSTVIAKERRGEYLGDTVQVIPHITDEIKRRIMAMAEPNADGRRPDVVITEIGGTVGDIESQPFLEAARQVRHDLGRENVFFLHVSLVPYLAPSGELKTKPTQHSVAALRSIGITPDALILRCDRDVPEALKNKIALMCDVDIDGIISTPAAPSIYDIPKVLHREELDAFVVRRLNLPFRDVDWTEWDDLLRRVHEPKETVRIALVGKYVELSDAYLSVIEAIRAGGFKHRAKVEISWVGSDDCQTDGGVASALGDVHGVLIPGGFGIRGIEGKISAISYARSRGLPVFGLCLGLQCIVIEAARSVGLTEANSAEFEPGTPDPVISTMADQEHIVSGQADLGGTMRLGAYPAVLESGSIVAEAYQSTKVSERHRHRYEVNNAYRERIAESGLRFSGTSPDGHLVEFVEYPPEQHPFVVGTQAHPELKSRPTRPHPLFAAFVKAAIDYKEGELLPVEMPERVSNGAERRDQVGQSIPEPANRG.

An amidoligase domain region spans residues 1 to 278 (MRRHPQTATK…DAFVVRRLNL (278 aa)). Ser20 contributes to the CTP binding site. Ser20 is a UTP binding site. ATP is bound by residues 21 to 26 (SLGKGL) and Asp78. Positions 78 and 152 each coordinate Mg(2+). CTP contacts are provided by residues 159-161 (DIE), 199-204 (KTKPTQ), and Lys235. Residues 199–204 (KTKPTQ) and Lys235 each bind UTP. Residues 303–551 (RIALVGKYVE…VKAAIDYKEG (249 aa)) form the Glutamine amidotransferase type-1 domain. Gly366 provides a ligand contact to L-glutamine. Cys393 serves as the catalytic Nucleophile; for glutamine hydrolysis. L-glutamine is bound by residues 394–397 (LGLQ), Glu416, and Arg477. Active-site residues include His524 and Glu526. Residues 559–583 (PERVSNGAERRDQVGQSIPEPANRG) form a disordered region.

It belongs to the CTP synthase family. As to quaternary structure, homotetramer.

The catalysed reaction is UTP + L-glutamine + ATP + H2O = CTP + L-glutamate + ADP + phosphate + 2 H(+). It carries out the reaction L-glutamine + H2O = L-glutamate + NH4(+). It catalyses the reaction UTP + NH4(+) + ATP = CTP + ADP + phosphate + 2 H(+). The protein operates within pyrimidine metabolism; CTP biosynthesis via de novo pathway; CTP from UDP: step 2/2. Allosterically activated by GTP, when glutamine is the substrate; GTP has no effect on the reaction when ammonia is the substrate. The allosteric effector GTP functions by stabilizing the protein conformation that binds the tetrahedral intermediate(s) formed during glutamine hydrolysis. Inhibited by the product CTP, via allosteric rather than competitive inhibition. In terms of biological role, catalyzes the ATP-dependent amination of UTP to CTP with either L-glutamine or ammonia as the source of nitrogen. Regulates intracellular CTP levels through interactions with the four ribonucleotide triphosphates. This chain is CTP synthase, found in Mycobacterium ulcerans (strain Agy99).